The chain runs to 1108 residues: Mediator of RNA polymerase II transcription subunit 14 (1108 aa).

Disordered regions lie at residues 1 to 30 (MAAVMMNGVGPDGAMKPNLDQKLNNHGGDT), 35 to 54 (SSEIVQQQTPARSLQSDNPL), and 1048 to 1108 (QQQR…VDLT). A compositionally biased stretch (polar residues) spans 35 to 52 (SSEIVQQQTPARSLQSDN). Positions 1048–1080 (QQQRQPVVQPGQQPQVQNQANGVMNRGPQRPGL) are enriched in low complexity.

Belongs to the Mediator complex subunit 14 family. In terms of assembly, component of the Mediator complex.

Its subcellular location is the nucleus. Functionally, component of the Mediator complex, a coactivator involved in the regulated transcription of nearly all RNA polymerase II-dependent genes. Mediator functions as a bridge to convey information from gene-specific regulatory proteins to the basal RNA polymerase II transcription machinery. Mediator is recruited to promoters by direct interactions with regulatory proteins and serves as a scaffold for the assembly of a functional preinitiation complex with RNA polymerase II and the general transcription factors. The polypeptide is Mediator of RNA polymerase II transcription subunit 14 (RGR1) (Pyricularia oryzae (strain 70-15 / ATCC MYA-4617 / FGSC 8958) (Rice blast fungus)).